The sequence spans 209 residues: B3 domain-containing protein At2g31420 (209 aa).

Residues 101–198 constitute a DNA-binding region (TF-B3); it reads LSKLEKSDFL…KLCFALSSPT (98 aa).

The protein resides in the nucleus. The sequence is that of B3 domain-containing protein At2g31420 from Arabidopsis thaliana (Mouse-ear cress).